The chain runs to 539 residues: MVLPVADLPDDVDALKAMILAMAKERAANEARLAAAAAEVARLKAVEKSANERIANLTSILKVLQRTQHGTRSERLRLAVNDEQVSFAFEEVETGLSEIQSELNRAAGDKPKRAPRPRKGFAAHLERIEEVIEPEVPADCAGLEKVLIGEDRSERLDVVPPKFRVIVTRRPKYAFRGRDGVVQALAPAHLIESGLPTERLLAYIAVSKYADGLPLYRQEAIYLRDGVEVSRSLMAQWMGHLGFELQMLADYILERVKEGERVFADETTLPTLAPGSGKTTKAWLWAYARDDRPYGGTSPPMVAYRFEDGRGADCVARHLAGFSGILQVDGYSAYTNLAKARAKTGSNETIQLAGCWAHLRRKFYDLHISGVSQAATDSIIAMTELWRLEDEVRGKDAASRAELRQEKSSAIVASLFELWEKELGKVSGKSKTAEAIRYALTRREALERFLTDGRIEIDSNIVERAIRPQTITRKNSLFAGSEGGGRTWATVATLLQTCKMNGVDPLDWLSQTLTRIAQGWPASEIEALMPWNFKPDAIG.

The protein belongs to the transposase 25 family.

This is an uncharacterized protein from Sinorhizobium fredii (strain NBRC 101917 / NGR234).